Reading from the N-terminus, the 374-residue chain is Methylthioribose-1-phosphate isomerase (374 aa).

The residue at position 2 (Ser2) is an N-acetylserine. Asp253 acts as the Proton donor in catalysis.

This sequence belongs to the eIF-2B alpha/beta/delta subunits family. MtnA subfamily.

The protein resides in the cytoplasm. It is found in the nucleus. It carries out the reaction 5-(methylsulfanyl)-alpha-D-ribose 1-phosphate = 5-(methylsulfanyl)-D-ribulose 1-phosphate. Its pathway is amino-acid biosynthesis; L-methionine biosynthesis via salvage pathway; L-methionine from S-methyl-5-thio-alpha-D-ribose 1-phosphate: step 1/6. Catalyzes the interconversion of methylthioribose-1-phosphate (MTR-1-P) into methylthioribulose-1-phosphate (MTRu-1-P). This is Methylthioribose-1-phosphate isomerase from Arabidopsis thaliana (Mouse-ear cress).